A 349-amino-acid chain; its full sequence is Very-long-chain 3-oxoacyl-CoA reductase (349 aa).

Residues 29 to 49 (AASLVFATGGLFLLSRGLSFL) form a helical membrane-spanning segment. Residues Leu74, Asp129, Asp137, Asn156, Tyr223, Lys227, Val256, and Ser258 each coordinate NADP(+). Tyr223 functions as the Proton donor in the catalytic mechanism. Residue Lys227 is the Lowers pKa of active site Tyr of the active site.

The protein belongs to the short-chain dehydrogenases/reductases (SDR) family.

Its subcellular location is the endoplasmic reticulum membrane. The catalysed reaction is a very-long-chain (3R)-3-hydroxyacyl-CoA + NADP(+) = a very-long-chain 3-oxoacyl-CoA + NADPH + H(+). It participates in lipid metabolism; fatty acid biosynthesis. In terms of biological role, component of the microsomal membrane bound fatty acid elongation system, which produces the 26-carbon very long-chain fatty acids (VLCFA) from palmitate. Catalyzes the reduction of the 3-ketoacyl-CoA intermediate that is formed in each cycle of fatty acid elongation. VLCFAs serve as precursors for ceramide and sphingolipids. The polypeptide is Very-long-chain 3-oxoacyl-CoA reductase (Coccidioides immitis (strain RS) (Valley fever fungus)).